The chain runs to 1058 residues: Leucine--tRNA ligase, cytoplasmic (1058 aa).

The 'HIGH' region signature appears at 48–58; the sequence is PYMNGRLHVGH. Residues 711–715 carry the 'KMSKS' region motif; the sequence is KMSKS. Residue Lys714 participates in ATP binding.

This sequence belongs to the class-I aminoacyl-tRNA synthetase family.

It is found in the cytoplasm. It catalyses the reaction tRNA(Leu) + L-leucine + ATP = L-leucyl-tRNA(Leu) + AMP + diphosphate. The sequence is that of Leucine--tRNA ligase, cytoplasmic (leuS) from Dictyostelium discoideum (Social amoeba).